Consider the following 248-residue polypeptide: Peroxisomal membrane protein 11A (248 aa).

The Cytoplasmic portion of the chain corresponds to 1–97; that stretch reads MATKAPEKIT…RSSRWDSNHE (97 aa). Residues 98 to 118 traverse the membrane as a helical segment; it reads LVLLIIAYGGEGLYYFVEQFI. Over 119–220 the chain is Lumenal; it reads WLTKSGLIDA…MTIADIRDGK (102 aa). The chain crosses the membrane as a helical span at residues 221 to 241; it reads GVLSAPNVISSAGLFSAIVST. Over 242 to 248 the chain is Cytoplasmic; it reads HKNWISC.

The protein belongs to the peroxin-11 family. Homooligomer. Interacts with ARC5 and FIS1B on peroxisomes. Expressed in developing siliques.

The protein resides in the peroxisome membrane. Functionally, involved in peroxisomal proliferation. Promotes peroxisomal duplication, aggregation or elongation without fission. This chain is Peroxisomal membrane protein 11A (PEX11A), found in Arabidopsis thaliana (Mouse-ear cress).